A 493-amino-acid chain; its full sequence is Glutathione hydrolase 6 (493 aa).

The Cytoplasmic portion of the chain corresponds to 1–54; it reads MERAEEPVVYQKLLPWEPSLESEEEVEEEETSEALVLNPRRHQDSSRNKAGGLP. The tract at residues 19–52 is disordered; it reads SLESEEEVEEEETSEALVLNPRRHQDSSRNKAGG. The span at 20 to 32 shows a compositional bias: acidic residues; it reads LESEEEVEEEETS. Residues 55–75 traverse the membrane as a helical; Signal-anchor for type II membrane protein segment; it reads GTWARVVAALLLLAVGCSLAV. At 76–493 the chain is on the extracellular side; sequence RQLQNQGRST…PHACCPFQGF (418 aa). Residues 83–105 are disordered; it reads RSTGSLGSVAPPPGGHSHGPGVY. N161 and N370 each carry an N-linked (GlcNAc...) asparagine glycan. Positions 442–455 are enriched in low complexity; the sequence is PPTQAQHQHQGQQE. The tract at residues 442–464 is disordered; that stretch reads PPTQAQHQHQGQQEPTEHPSTCG.

Belongs to the gamma-glutamyltransferase family. Heterodimer composed of the light and heavy chains. The active site is located in the light chain. In terms of processing, cleaved by autocatalysis into a large and a small subunit and the autocatalytic cleavage is essential to the functional activation of the enzyme.

It localises to the membrane. It carries out the reaction an N-terminal (5-L-glutamyl)-[peptide] + an alpha-amino acid = 5-L-glutamyl amino acid + an N-terminal L-alpha-aminoacyl-[peptide]. It catalyses the reaction glutathione + H2O = L-cysteinylglycine + L-glutamate. The catalysed reaction is an S-substituted glutathione + H2O = an S-substituted L-cysteinylglycine + L-glutamate. Its pathway is sulfur metabolism; glutathione metabolism. Hydrolyzes and transfers gamma-glutamyl moieties from glutathione and other gamma-glutamyl compounds to acceptors. This chain is Glutathione hydrolase 6, found in Homo sapiens (Human).